A 300-amino-acid chain; its full sequence is 5'-adenylylsulfate reductase-like 5 (300 aa).

Positions 1-23 (MDSRVSILFVCAIAVSCFTSGSA) are cleaved as a signal peptide. Positions 41 to 161 (FDLEAKCPPS…LIEFYEEATG (121 aa)) constitute a Thioredoxin domain. N-linked (GlcNAc...) asparagine glycosylation is present at Asn-136. The chain crosses the membrane as a helical span at residues 202–222 (FLVLSLLFICLQMAILVFPIA).

Its subcellular location is the membrane. In Arabidopsis thaliana (Mouse-ear cress), this protein is 5'-adenylylsulfate reductase-like 5 (APRL5).